Here is a 238-residue protein sequence, read N- to C-terminus: Transcriptional activator protein AnoR (238 aa).

Positions 170–236 (EFSQFNLYLT…SAAIRAVMLG (67 aa)) constitute an HTH luxR-type domain. Residues 195–214 (SAEIAQIIGVTERTVNFHLC) constitute a DNA-binding region (H-T-H motif).

The protein belongs to the autoinducer-regulated transcriptional regulatory protein family.

In terms of biological role, positively regulates the expression of anoI. Required for biofilm formation and motility. Probably part of a quorum-sensing system with AnoI. The protein is Transcriptional activator protein AnoR of Acinetobacter nosocomialis.